The following is an 807-amino-acid chain: Mechanosensitive cation channel TMEM63A (807 aa).

At 1–51 the chain is on the extracellular side; the sequence is MMDSPFLELWQSKAVSIREQLGLGDRPNDSYCYNSAKNSTVLQGVTFGGIP. N-linked (GlcNAc...) asparagine glycosylation is present at asparagine 38. Residues 52 to 74 traverse the membrane as a helical segment; it reads TVLLIDVSCFLFLILVFSIIRRR. Residues 75–134 lie on the Cytoplasmic side of the membrane; the sequence is FWDYGRIALVSEADSESRFQRLSSTSSSGQQDFENELGCCPWLTAIFRLHDDQILEWCGE. Residues 135–167 traverse the membrane as a helical segment; the sequence is DAIHYLSFQRHIIFLLVVVSFLSLCVILPVNLS. The Extracellular portion of the chain corresponds to 168–191; it reads GDLLDKDPYSFGRTTIANLQTDND. Residues 192–217 traverse the membrane as a helical segment; sequence LLWLHTIFAVIYLFLTVGFMRHHTQS. Over 218 to 416 the chain is Cytoplasmic; that stretch reads IKYKEENLVR…CWKNLSIQGL (199 aa). Residues 219–414 form an intracellular linker IL2; confers mechanosensitivity region; the sequence is KYKEENLVRR…DICWKNLSIQ (196 aa). The chain crosses the membrane as a helical span at residues 417–444; sequence RWWLQWLGINFTLFLGLFFLTTPSIILS. The Extracellular portion of the chain corresponds to 445 to 462; the sequence is TMDKFNVTKPIHALNNPI. N-linked (GlcNAc...) asparagine glycosylation is present at asparagine 450. Residues 463-490 form a helical membrane-spanning segment; that stretch reads ISQFFPTLLLWSFSALLPSIVYYSTLLE. Over 491-495 the chain is Cytoplasmic; it reads SHWTK. The chain crosses the membrane as a helical span at residues 496–532; it reads SGENQIMMTKVYIFLIFMVLILPSLGLTSLDFFFRWL. The Extracellular portion of the chain corresponds to 533–554; the sequence is FDKTSSEASIRLECVFLPDQGA. A helical membrane pass occupies residues 555–586; sequence FFVNYVIASAFIGNGMELLRLPGLILYTFRMI. The segment at 555–586 is gating helix; the sequence is FFVNYVIASAFIGNGMELLRLPGLILYTFRMI. At 587–606 the chain is on the cytoplasmic side; sequence MAKTAADRRNVKQNQAFQYE. Residues 607–624 traverse the membrane as a helical segment; sequence FGAMYAWMLCVFTVIVAY. Residues 625 to 628 lie on the Extracellular side of the membrane; that stretch reads SITC. The chain crosses the membrane as a helical span at residues 629–651; that stretch reads PIIAPFGLIYILLKHMVDRHNLY. Residues 652–661 lie on the Cytoplasmic side of the membrane; the sequence is FVYLPAKLEK. Residues 662–689 traverse the membrane as a helical segment; the sequence is GIHFAAVNQALAAPILCLFWLYFFSFLR. Over 690–694 the chain is Extracellular; it reads LGMKA. The helical transmembrane segment at 695–709 threads the bilayer; that stretch reads PATLFTFLVLLLTIL. Topologically, residues 710–807 are cytoplasmic; that stretch reads VCLAHTCFGC…GSVAAAPQEA (98 aa). Phosphoserine is present on serine 739.

The protein belongs to the CSC1 (TC 1.A.17) family. As to quaternary structure, monomer. In terms of processing, N-Glycosylated.

It is found in the lysosome membrane. It localises to the early endosome membrane. Its subcellular location is the cell membrane. It catalyses the reaction Ca(2+)(in) = Ca(2+)(out). Mechanosensitive cation channel with low conductance and high activation threshold. In contrast to TMEM63B, does not show phospholipid scramblase activity. Acts as a regulator of lysosomal morphology by mediating lysosomal mechanosensitivity. Important for the baby's first breath and respiration throughout life. Upon lung inflation conducts cation currents in alveolar type 1 and 2 cells triggering lamellar body exocytosis and surfactant secretion into airspace. Also acts as an osmosensitive cation channel preferentially activated by hypotonic stress. This chain is Mechanosensitive cation channel TMEM63A, found in Homo sapiens (Human).